Consider the following 287-residue polypeptide: Pyridoxal kinase PdxY (287 aa).

Substrate contacts are provided by residues Ser10 and 45–46; that span reads TQ. Residues Asp112, Ala144, Glu149, Lys182, and 209–212 contribute to the ATP site; that span reads RPLV. Substrate is bound at residue Asp224.

It belongs to the pyridoxine kinase family. PdxY subfamily. As to quaternary structure, homodimer. It depends on Mg(2+) as a cofactor.

It carries out the reaction pyridoxal + ATP = pyridoxal 5'-phosphate + ADP + H(+). It functions in the pathway cofactor metabolism; pyridoxal 5'-phosphate salvage; pyridoxal 5'-phosphate from pyridoxal: step 1/1. Functionally, pyridoxal kinase involved in the salvage pathway of pyridoxal 5'-phosphate (PLP). Catalyzes the phosphorylation of pyridoxal to PLP. In Shigella sonnei (strain Ss046), this protein is Pyridoxal kinase PdxY.